The chain runs to 490 residues: MEGQDEVSAREQHFHSQVRESTICFLLFAILYVVSYFIITRYKRKSDEQEDEDAIVNRISLFLSTFTLAVSAGAVLLLPFSIISNEILLSFPQNYYIQWLNGSLIHGLWNLASLFSNLCLFVLMPFAFFFLESEGFAGLKKGIRARILETLVMLLLLALLILGIVWVASALIDNDAASMESLYDLWEFYLPYLYSCISLMGCLLLLLCTPVGLSRMFTVMGQLLVKPTILEDLDEQIYIITLEEEALQRRLNGLSSSVEYNIMELEQELENVKTLKTKLERRKKASAWERNLVYPAVMVLLLIETSISVLLVACNILCLLVDETAMPKGTRGPGIGNASLSTFGFVGAALEIILIFYLMVSSVVGFYSLRFFGNFTPKKDDTTMTKIIGNCVSILVLSSALPVMSRTLGITRFDLLGDFGRFNWLGNFYIVLSYNLLFAIVTTLCLVRKFTSAVREELFKALGLHKLHLPNTSRDSETAKPSVNGHQKAL.

The Extracellular portion of the chain corresponds to Met1–Arg19. Residues Glu20 to Thr40 form a helical membrane-spanning segment. Residues Arg41–Phe62 lie on the Cytoplasmic side of the membrane. The helical transmembrane segment at Leu63–Ile83 threads the bilayer. At Ser84–Asn110 the chain is on the extracellular side. The chain crosses the membrane as a helical span at residues Leu111 to Leu131. The Cytoplasmic portion of the chain corresponds to Glu132–Leu151. A helical membrane pass occupies residues Val152–Ile172. Topologically, residues Asp173–Glu187 are extracellular. Residues Phe188 to Cys208 form a helical membrane-spanning segment. At Thr209–Asn291 the chain is on the cytoplasmic side. Residues Arg250–Ala287 adopt a coiled-coil conformation. The chain crosses the membrane as a helical span at residues Leu292–Val312. At Ala313–Ser339 the chain is on the extracellular side. Residues Leu340–Val360 form a helical membrane-spanning segment. Over Ser361–Thr383 the chain is Cytoplasmic. A helical membrane pass occupies residues Met384 to Met404. The Extracellular segment spans residues Ser405–Gly426. The chain crosses the membrane as a helical span at residues Asn427–Val447. The Cytoplasmic segment spans residues Arg448–Leu490.

This sequence belongs to the LIMR family. Widely expressed with strongest expression in heart and pancreas.

Its subcellular location is the membrane. Functionally, putative membrane receptor. The polypeptide is Limb region 1 protein homolog (LMBR1) (Homo sapiens (Human)).